Reading from the N-terminus, the 143-residue chain is MHLTLFKELLKQPKPKFHFEIEPNVSFLAVEEGPASLRSYSIGNVSRIYDGIRVPPKPEEPLNCCQSGCAICVWDVYADDLEEYNRARRKAKRHYLDKHLPVPPDLAKVSLKETSSLEELPPQLKAFVLLEKRLMKDKQSKNN.

Residues 48 to 93 enclose the Oxidoreductase-like domain; sequence IYDGIRVPPKPEEPLNCCQSGCAICVWDVYADDLEEYNRARRKAKR.

Belongs to the UPF0651 family.

The protein localises to the mitochondrion. This Schizosaccharomyces pombe (strain 972 / ATCC 24843) (Fission yeast) protein is UPF0651 protein P31B10.02, mitochondrial.